Here is a 385-residue protein sequence, read N- to C-terminus: Deoxyguanosinetriphosphate triphosphohydrolase-like protein (385 aa).

The region spanning 62-197 (RLTHSLEVAQ…VSLADDIAYS (136 aa)) is the HD domain.

Belongs to the dGTPase family. Type 2 subfamily.

In Neorickettsia sennetsu (strain ATCC VR-367 / Miyayama) (Ehrlichia sennetsu), this protein is Deoxyguanosinetriphosphate triphosphohydrolase-like protein.